The sequence spans 498 residues: Type VI secretion system sheath protein TssC1 (498 aa).

In terms of assembly, forms a heterodimer with TssB1. Heterodimers assemble to form the sheath of the T6SS machinery. Interacts with TssA1.

Its function is as follows. Core component of the H1 type VI (H1-T6SS) secretion system that plays a role in the release of toxins targeting both eukaryotic and prokaryotic species. Forms the sheath of the structure by assembling into tubules together with TssB1 resulting in the stacking of cogwheel-like structures showing predominantly a 12-fold symmetry. The sheath contracts to provide the energy needed for effector delivery. The protein is Type VI secretion system sheath protein TssC1 of Pseudomonas aeruginosa (strain ATCC 15692 / DSM 22644 / CIP 104116 / JCM 14847 / LMG 12228 / 1C / PRS 101 / PAO1).